The chain runs to 289 residues: MYFLTPILVAILCILVVWIFKNADRSMEKKKGEPRTRAEARPWVDEDLKDSSDLHQAEEDADEWQESEENVEHIPFSHNHYPEKEMVKRSQEFYELLNKRRSVRFISNEQVPMEVIDNVIRTAGTAPSGAHTEPWTFVVVKDPDVKHKIRKIIEEEEEINYMKRMGHRWVTDLKKLRTNWIKEYLDTAPILILIFKQVHGFAANGKKKVHYYNEISVSIACGILLAALQNAGLVTVTTTPLNCGPRLRVLLGRPAHEKLLMLLPVGYPSKEATVPDLKRKPLDQIMVTV.

Residues 1 to 21 traverse the membrane as a helical segment; sequence MYFLTPILVAILCILVVWIFK. Basic and acidic residues predominate over residues 29-58; that stretch reads KKKGEPRTRAEARPWVDEDLKDSSDLHQAE. Residues 29–69 are disordered; that stretch reads KKKGEPRTRAEARPWVDEDLKDSSDLHQAEEDADEWQESEE. Residues 59 to 69 are compositionally biased toward acidic residues; it reads EDADEWQESEE. FMN is bound by residues 100–104, Ser128, and 128–129; these read RRSVR and SG. The 3-iodo-L-tyrosine site is built by Ala130, Glu157, Tyr161, and Lys182. FMN contacts are provided by residues 237 to 239 and Arg279; that span reads TTT.

The protein belongs to the nitroreductase family. In terms of assembly, homodimer. The cofactor is FMN. As to expression, expressed at a high level in thyroid gland (at protein level). Expressed at a high level in thyroid gland and at lower level in kidney and trachea.

The protein resides in the cell membrane. The protein localises to the cytoplasmic vesicle membrane. The enzyme catalyses 2 iodide + L-tyrosine + 2 NADP(+) = 3,5-diiodo-L-tyrosine + 2 NADPH + H(+). The catalysed reaction is iodide + L-tyrosine + NADP(+) = 3-iodo-L-tyrosine + NADPH. It catalyses the reaction 3-iodo-L-tyrosine + iodide + NADP(+) = 3,5-diiodo-L-tyrosine + NADPH + H(+). It carries out the reaction L-tyrosine + chloride + NADP(+) = 3-chloro-L-tyrosine + NADPH. The enzyme catalyses bromide + L-tyrosine + NADP(+) = 3-bromo-L-tyrosine + NADPH. Catalyzes the dehalogenation of halotyrosines such as 3-bromo-L-tyrosine, 3-chloro-L-tyrosine, 3-iodo-L-tyrosine and 3,5-diiodo-L-tyrosine. During thyroid hormone biosynthesis, facilitates iodide salvage by catalysing the oxidative NADPH-dependent deiodination of the halogenated by-products of thyroid hormone production, monoiodotyrosine (L-MIT) and diiodotyrosine (L-DIT). The scavanged iodide can then reenter the hormone-producing pathways. Acts more efficiently on 3-iodo-L-tyrosine than 3,5-diiodo-L-tyrosine. In Homo sapiens (Human), this protein is Iodotyrosine deiodinase 1.